Here is a 278-residue protein sequence, read N- to C-terminus: Sulfur carrier protein FdhD (278 aa).

The active-site Cysteine persulfide intermediate is the cysteine 124.

The protein belongs to the FdhD family.

The protein localises to the cytoplasm. In terms of biological role, required for formate dehydrogenase (FDH) activity. Acts as a sulfur carrier protein that transfers sulfur from IscS to the molybdenum cofactor prior to its insertion into FDH. The sequence is that of Sulfur carrier protein FdhD from Burkholderia cenocepacia (strain ATCC BAA-245 / DSM 16553 / LMG 16656 / NCTC 13227 / J2315 / CF5610) (Burkholderia cepacia (strain J2315)).